A 246-amino-acid polypeptide reads, in one-letter code: NAD-dependent protein deacylase (246 aa).

In terms of domain architecture, Deacetylase sirtuin-type spans 1-245; sequence MKEFITKHRD…ELIREILDNP (245 aa). An NAD(+)-binding site is contributed by 20–39; the sequence is GAGISAESGIPTFRGSEGLW. Residues tyrosine 64 and arginine 67 each contribute to the substrate site. An NAD(+)-binding site is contributed by 98-101; that stretch reads QNVD. The active-site Proton acceptor is histidine 116. Zn(2+) is bound by residues cysteine 124, cysteine 127, cysteine 146, and cysteine 149. NAD(+)-binding positions include 186–188, 212–214, and threonine 230; these read GTS and NPE.

Belongs to the sirtuin family. Class III subfamily. Zn(2+) is required as a cofactor.

The protein localises to the cytoplasm. It catalyses the reaction N(6)-acetyl-L-lysyl-[protein] + NAD(+) + H2O = 2''-O-acetyl-ADP-D-ribose + nicotinamide + L-lysyl-[protein]. The enzyme catalyses N(6)-succinyl-L-lysyl-[protein] + NAD(+) + H2O = 2''-O-succinyl-ADP-D-ribose + nicotinamide + L-lysyl-[protein]. NAD-dependent lysine deacetylase and desuccinylase that specifically removes acetyl and succinyl groups on target proteins. Modulates the activities of several proteins which are inactive in their acylated form. The polypeptide is NAD-dependent protein deacylase (Leptospira interrogans serogroup Icterohaemorrhagiae serovar Lai (strain 56601)).